Here is a 183-residue protein sequence, read N- to C-terminus: ATP synthase subunit b, chloroplastic (183 aa).

A helical transmembrane segment spans residues 27 to 49 (LATNLINLTVVVGVLIFFGKGVL).

This sequence belongs to the ATPase B chain family. As to quaternary structure, F-type ATPases have 2 components, F(1) - the catalytic core - and F(0) - the membrane proton channel. F(1) has five subunits: alpha(3), beta(3), gamma(1), delta(1), epsilon(1). F(0) has four main subunits: a(1), b(1), b'(1) and c(10-14). The alpha and beta chains form an alternating ring which encloses part of the gamma chain. F(1) is attached to F(0) by a central stalk formed by the gamma and epsilon chains, while a peripheral stalk is formed by the delta, b and b' chains.

Its subcellular location is the plastid. The protein localises to the chloroplast thylakoid membrane. Its function is as follows. F(1)F(0) ATP synthase produces ATP from ADP in the presence of a proton or sodium gradient. F-type ATPases consist of two structural domains, F(1) containing the extramembraneous catalytic core and F(0) containing the membrane proton channel, linked together by a central stalk and a peripheral stalk. During catalysis, ATP synthesis in the catalytic domain of F(1) is coupled via a rotary mechanism of the central stalk subunits to proton translocation. Functionally, component of the F(0) channel, it forms part of the peripheral stalk, linking F(1) to F(0). This Brachypodium distachyon (Purple false brome) protein is ATP synthase subunit b, chloroplastic.